Here is a 69-residue protein sequence, read N- to C-terminus: Magnetosome protein MamI (69 aa).

The Cytoplasmic segment spans residues 1–2; sequence MP. The helical transmembrane segment at 3-23 threads the bilayer; sequence SVIFGLLALAIGLLGLTAWWW. The Lumenal portion of the chain corresponds to 24–31; it reads SVTEFLRG. Residues 32–52 traverse the membrane as a helical segment; it reads AVPVALIIFGLVALAAGVQSV. The Cytoplasmic segment spans residues 53 to 69; it reads RVPPAGKRANSDPNIDG.

The protein belongs to the magnetosome MamI protein family.

Its subcellular location is the magnetosome membrane. Its function is as follows. May be involved in an early stage of magnetosome nucleation. Not essential for formation of magnetosome membrane vesicles, it is probably functionally redundant with other proteins. May bind magnetite. One of 7 genes (mamLQBIEMO) able to induce magnetosome membrane biogenesis; coexpression of mamLQRBIEMO in a deletion of the 17 gene mamAB operon restores magnetosome vesicle formation but not magnetite biosynthesis. This Magnetospirillum gryphiswaldense (strain DSM 6361 / JCM 21280 / NBRC 15271 / MSR-1) protein is Magnetosome protein MamI.